We begin with the raw amino-acid sequence, 847 residues long: Protein SEY1 (847 aa).

The Cytoplasmic segment spans residues 1 to 720 (MSSGEPLSET…KRSIVQHVTQ (720 aa)). Residues 55–290 (GHNYHIVAVF…VENDIFKPEY (236 aa)) enclose the GB1/RHD3-type G domain. 65–72 (GSQSTGKS) contributes to the GTP binding site. Residues 721-741 (IPYYIYIIILLLGWNEFMAVV) form a helical membrane-spanning segment. At 742 to 744 (RNP) the chain is on the lumenal side. Residues 745-765 (FTFSLAIILGASLYILYTMNL) traverse the membrane as a helical segment. Over 766–847 (LKPALTVTQR…VTSLNVVEEE (82 aa)) the chain is Cytoplasmic.

Belongs to the TRAFAC class dynamin-like GTPase superfamily. GB1/RHD3 GTPase family. RHD3 subfamily.

Its subcellular location is the endoplasmic reticulum membrane. In terms of biological role, cooperates with the reticulon proteins and tubule-shaping DP1 family proteins to generate and maintain the structure of the tubular endoplasmic reticulum network. Has GTPase activity, which is required for its function in ER organization. The chain is Protein SEY1 from Lodderomyces elongisporus (strain ATCC 11503 / CBS 2605 / JCM 1781 / NBRC 1676 / NRRL YB-4239) (Yeast).